A 201-amino-acid chain; its full sequence is Pyrrolidone-carboxylate peptidase (201 aa).

Catalysis depends on residues Glu-78, Cys-141, and His-165.

Belongs to the peptidase C15 family. As to quaternary structure, homotetramer.

The protein localises to the cytoplasm. The enzyme catalyses Release of an N-terminal pyroglutamyl group from a polypeptide, the second amino acid generally not being Pro.. Functionally, removes 5-oxoproline from various penultimate amino acid residues except L-proline. This Brachyspira hyodysenteriae (strain ATCC 49526 / WA1) protein is Pyrrolidone-carboxylate peptidase.